Consider the following 336-residue polypeptide: Anthranilate phosphoribosyltransferase (336 aa).

5-phospho-alpha-D-ribose 1-diphosphate contacts are provided by residues Gly82, 85 to 86 (GD), Thr90, 92 to 95 (NIST), 110 to 118 (KHGNRSVSS), and Ser122. Residue Gly82 participates in anthranilate binding. Ser94 contributes to the Mg(2+) binding site. Asn113 is an anthranilate binding site. Arg168 lines the anthranilate pocket. Mg(2+)-binding residues include Asp227 and Glu228.

Belongs to the anthranilate phosphoribosyltransferase family. In terms of assembly, homodimer. Requires Mg(2+) as cofactor.

It catalyses the reaction N-(5-phospho-beta-D-ribosyl)anthranilate + diphosphate = 5-phospho-alpha-D-ribose 1-diphosphate + anthranilate. It functions in the pathway amino-acid biosynthesis; L-tryptophan biosynthesis; L-tryptophan from chorismate: step 2/5. In terms of biological role, catalyzes the transfer of the phosphoribosyl group of 5-phosphorylribose-1-pyrophosphate (PRPP) to anthranilate to yield N-(5'-phosphoribosyl)-anthranilate (PRA). The protein is Anthranilate phosphoribosyltransferase of Leptospira interrogans serogroup Icterohaemorrhagiae serovar Lai (strain 56601).